The primary structure comprises 606 residues: Anthranilate synthase alpha subunit 2, chloroplastic (606 aa).

The transit peptide at 1–49 directs the protein to the chloroplast; sequence MESIAAATFTPSRLAARPATPAAAAAPVRARAAVAAGGRRRTSRRGGVR.

Belongs to the anthranilate synthase component I family. Heterotetramer consisting of two non-identical subunits: a beta subunit and a large alpha subunit.

The protein resides in the plastid. The protein localises to the chloroplast. It catalyses the reaction chorismate + L-glutamine = anthranilate + pyruvate + L-glutamate + H(+). The protein operates within amino-acid biosynthesis; L-tryptophan biosynthesis; L-tryptophan from chorismate: step 1/5. Feedback inhibition by tryptophan. In terms of biological role, part of a heterotetrameric complex that catalyzes the two-step biosynthesis of anthranilate, an intermediate in the biosynthesis of L-tryptophan. In the first step, the glutamine-binding beta subunit of anthranilate synthase (AS) provides the glutamine amidotransferase activity which generates ammonia as a substrate that, along with chorismate, is used in the second step, catalyzed by the large alpha subunit of AS to produce anthranilate. The polypeptide is Anthranilate synthase alpha subunit 2, chloroplastic (Oryza sativa subsp. japonica (Rice)).